A 657-amino-acid polypeptide reads, in one-letter code: MAAAVVTKTAWKLQEIVAHSSNVSSLVLGKSTGRLLATGGDDCRVNVWSVNKPNCVMSLTGHTTPIESLQISAKEELIVAGSQSGSIRVWDLEAAKILRTLLGHKANICSLDFHPYGSFVASGSLDTDIKLWDVRRKGCIFKYKSHTQAVRCLRFSPDGKWLASAADDHTVKLWDLTAGKVMFEFTGHSGPVNVVEFHPSEYLLASGSSDRTIRFWDLEKFHVVSCIEEEATPVRCILFNPDGCCLYGGFQDSLRVYGWEPERCFDVVVVNWGKVADLSVCHNQLIGVSFAQSTVSSFVVDLSRVTKSGSVPHGLLRNNELLAQPTPTGSSLRRSYDRPSTSCSKPQRVKHSSESERRSPSSEEDRDEKESKAEIQNPEDYKEIFQPRNAISRTPPHINEPFPAPPEDEPITAKEAVKPNQPVEVQTPLPKQELPETFQRPPIASSTPMPRAEPSVIPAARNEPIGLKASDFLPALKNQSQAELTDEEIMSQIRKGHKTVCMVLTSRHKNLDTVRAVWSTSDMKNSVDAAVATNDLSVVVDLLNIVNQTASLWKLDLCTVVLPQIEKLLQSKYESYVQTGCTSLKLILQRFLPLITDILAAPPSVGVDITREERLHKCRLCYKQLKNISNIVKNKSGLSGRHGSAFRELHLLMAVLE.

6 WD repeats span residues 18-58, 61-100, 103-142, 145-184, 187-226, and 229-269; these read AHSS…CVMS, GHTT…ILRT, GHKA…CIFK, SHTQ…VMFE, GHSG…VVSC, and EEAT…DVVV. Disordered regions lie at residues 318–410 and 423–454; these read NNEL…EDEP and VEVQ…RAEP. Over residues 325-345 the composition is skewed to polar residues; the sequence is PTPTGSSLRRSYDRPSTSCSK. Residues 351–385 are compositionally biased toward basic and acidic residues; sequence HSSESERRSPSSEEDRDEKESKAEIQNPEDYKEIF.

This sequence belongs to the WD repeat KATNB1 family. Interacts with KATNA1. This interaction enhances the microtubule binding and severing activity of KATNA1 and also targets this activity to the centrosome.

Its subcellular location is the cytoplasm. The protein localises to the cytoskeleton. The protein resides in the microtubule organizing center. It is found in the centrosome. It localises to the spindle pole. Its subcellular location is the spindle. Participates in a complex which severs microtubules in an ATP-dependent manner. May act to target the enzymatic subunit of this complex to sites of action such as the centrosome. Microtubule severing may promote rapid reorganization of cellular microtubule arrays and the release of microtubules from the centrosome following nucleation. This Gallus gallus (Chicken) protein is Katanin p80 WD40 repeat-containing subunit B1.